The sequence spans 160 residues: ATP synthase subunit delta, mitochondrial (160 aa).

The transit peptide at 1 to 22 directs the protein to the mitochondrion; it reads MFRQSLRSIARTRTGTIGVRTY.

F-type ATP synthases have 2 components, the catalytic core F(1) and the membrane-embedded component F(0), linked together by a central stalk and a peripheral stalk. The central stalk, also called rotor shaft, is often seen as part of F(1). The peripheral stalk is seen as part of F(0). F(0) contains the membrane channel next to the rotor. F-type ATP synthases form dimers but each monomer functions independently in ATP generation. The dimer consists of 18 different polypeptides: ATP1 (subunit alpha, part of F(1), 3 molecules per monomer), ATP2 (subunit beta, part of F(1), 3 molecules per monomer), ATP3 (subunit gamma, part of the central stalk), ATP4 (subunit b, part of the peripheral stalk), ATP5/OSCP (subunit 5/OSCP, part of the peripheral stalk), ATP6 (subunit a, part of the peripheral stalk), ATP7 (subunit d, part of the peripheral stalk), ATP8 (subunit 8, part of the peripheral stalk), OLI1 (subunit c, part of the rotor, 10 molecules per monomer), ATP14 (subunit h, part of the peripheral stalk), ATP15 (subunit epsilon, part of the central stalk), ATP16 (subunit delta, part of the central stalk), ATP17 (subunit f, part of the peripheral stalk), ATP18 (subunit i/j, part of the peripheral stalk). Dimer-specific subunits are ATP19 (subunit k, at interface between monomers), ATP20 (subunit g, at interface between monomers), TIM11 (subunit e, at interface between monomers). Also contains subunit L.

It localises to the mitochondrion inner membrane. Its function is as follows. Mitochondrial membrane ATP synthase (F(1)F(0) ATP synthase or Complex V) produces ATP from ADP in the presence of a proton gradient across the membrane which is generated by electron transport complexes of the respiratory chain. F-type ATP synthases consist of two structural domains, F(1) - containing the extramembraneous catalytic core, and F(0) - containing the membrane proton channel, linked together by a central stalk and a peripheral stalk. During catalysis, ATP synthesis in the catalytic domain of F(1) is coupled via a rotary mechanism of the central stalk subunits to proton translocation. Part of the complex F(1) domain and the central stalk which is part of the complex rotary element. Rotation of the central stalk against the surrounding alpha/ATP1(3)beta/ATP2(3) subunits leads to hydrolysis of ATP in three separate catalytic sites on the beta/ATP2 subunits. This is ATP synthase subunit delta, mitochondrial from Pichia angusta (Yeast).